A 339-amino-acid chain; its full sequence is RNA 3'-terminal phosphate cyclase (339 aa).

ATP-binding positions include Asp-109 and 286–290 (HLADQ). His-310 functions as the Tele-AMP-histidine intermediate in the catalytic mechanism.

The protein belongs to the RNA 3'-terminal cyclase family. Type 1 subfamily.

The protein resides in the cytoplasm. The enzyme catalyses a 3'-end 3'-phospho-ribonucleotide-RNA + ATP = a 3'-end 2',3'-cyclophospho-ribonucleotide-RNA + AMP + diphosphate. Catalyzes the conversion of 3'-phosphate to a 2',3'-cyclic phosphodiester at the end of RNA. The mechanism of action of the enzyme occurs in 3 steps: (A) adenylation of the enzyme by ATP; (B) transfer of adenylate to an RNA-N3'P to produce RNA-N3'PP5'A; (C) and attack of the adjacent 2'-hydroxyl on the 3'-phosphorus in the diester linkage to produce the cyclic end product. The biological role of this enzyme is unknown but it is likely to function in some aspects of cellular RNA processing. This Halobacterium salinarum (strain ATCC 29341 / DSM 671 / R1) protein is RNA 3'-terminal phosphate cyclase.